A 112-amino-acid polypeptide reads, in one-letter code: Cytochrome c-551 (112 aa).

Residues 1–20 (MKSKLSILMIGFALSVLLAA) form the signal peptide. Residue Cys-21 is the site of N-palmitoyl cysteine attachment. Cys-21 carries the S-diacylglycerol cysteine lipid modification. The segment covering 25–35 (DAKEEKTDTGS) has biased composition (basic and acidic residues). Residues 25–44 (DAKEEKTDTGSKTEATASEG) form a disordered region. One can recognise a Cytochrome c domain in the interval 39-112 (ATASEGEELY…VIAKWLSEKK (74 aa)). Residues Cys-52, Cys-55, His-56, and Met-91 each coordinate heme c.

Post-translationally, binds 1 heme c group covalently per subunit.

The protein localises to the cell membrane. Functionally, electron carrier protein. The protein is Cytochrome c-551 (cccB) of Bacillus subtilis (strain 168).